A 299-amino-acid polypeptide reads, in one-letter code: Tyrosine recombinase XerC (299 aa).

The Core-binding (CB) domain maps to 1 to 85 (MDQHLDAYCM…AVRGFYKYLN (85 aa)). The Tyr recombinase domain maps to 106-285 (RLPKTLDTDR…DFQHLATVYD (180 aa)). Catalysis depends on residues Arg-146, Lys-170, His-237, Arg-240, and His-263. Catalysis depends on Tyr-272, which acts as the O-(3'-phospho-DNA)-tyrosine intermediate.

Belongs to the 'phage' integrase family. XerC subfamily. In terms of assembly, forms a cyclic heterotetrameric complex composed of two molecules of XerC and two molecules of XerD.

The protein resides in the cytoplasm. Functionally, site-specific tyrosine recombinase, which acts by catalyzing the cutting and rejoining of the recombining DNA molecules. The XerC-XerD complex is essential to convert dimers of the bacterial chromosome into monomers to permit their segregation at cell division. It also contributes to the segregational stability of plasmids. The polypeptide is Tyrosine recombinase XerC (Pseudomonas syringae pv. syringae (strain B728a)).